The primary structure comprises 800 residues: Ent-copalyl diphosphate synthase 2 (800 aa).

A disordered region spans residues 52–80 (QGQETRERRQLDDDEHARPPQGGDDDVAA). The span at 55–69 (ETRERRQLDDDEHAR) shows a compositional bias: basic and acidic residues. Residue Lys242 participates in substrate binding. Positions 374 and 376 each coordinate Mg(2+). A DXDD motif motif is present at residues 374–377 (DIDD). A substrate-binding site is contributed by Lys461.

Belongs to the terpene synthase family. Mg(2+) is required as a cofactor.

The enzyme catalyses (2E,6E,10E)-geranylgeranyl diphosphate = ent-copalyl diphosphate. Its function is as follows. Catalyzes the conversion of geranylgeranyl diphosphate to the phytoalexin precursor ent-copalyl diphosphate. In Oryza sativa subsp. indica (Rice), this protein is Ent-copalyl diphosphate synthase 2 (CPS2).